The chain runs to 1052 residues: CCAAT/enhancer-binding protein zeta (1052 aa).

Disordered regions lie at residues 1–40, 122–158, and 621–677; these read MSADQEPVAFLAKQPWRPKQVTEDPDEEDEEDGDEGKNGF, VENKKQKATEGKKTSEKKVKNKTVAEQRPESCPVSKA, and SQLD…AEKP. The span at 23-34 shows a compositional bias: acidic residues; it reads EDPDEEDEEDGD. Basic and acidic residues predominate over residues 122–150; sequence VENKKQKATEGKKTSEKKVKNKTVAEQRP. Acidic residues predominate over residues 627–643; sequence PESDEENFVDVGDDSDD. Phosphoserine occurs at positions 629 and 641. Positions 644–677 are enriched in basic and acidic residues; the sequence is EKFTDADKGTATDAVKEVESKETEPESSAEAEKP. The residue at position 837 (S837) is a Phosphoserine. Residues 876–969 form a disordered region; sequence KGAKADLEDS…QGQKKKKKSF (94 aa). Residues 883-932 are compositionally biased toward acidic residues; it reads EDSESSDGELGDLDDDEVSLGSMNDEDFEIDEDGGTFMDVSDDESEDAPE. Phosphoserine is present on residues S958, S972, and S977. Residues 1032-1052 form a disordered region; that stretch reads KKKKNFRKKMKAPQKPKRQRK.

This sequence belongs to the CBF/MAK21 family. As to expression, ubiquitous.

It localises to the nucleus. Stimulates transcription from the HSP70 promoter. This is CCAAT/enhancer-binding protein zeta (Cebpz) from Mus musculus (Mouse).